A 120-amino-acid polypeptide reads, in one-letter code: Large ribosomal subunit protein uL18 (120 aa).

It belongs to the universal ribosomal protein uL18 family. In terms of assembly, part of the 50S ribosomal subunit; part of the 5S rRNA/L5/L18/L25 subcomplex. Contacts the 5S and 23S rRNAs.

In terms of biological role, this is one of the proteins that bind and probably mediate the attachment of the 5S RNA into the large ribosomal subunit, where it forms part of the central protuberance. The polypeptide is Large ribosomal subunit protein uL18 (Rhodopseudomonas palustris (strain BisA53)).